Here is an 815-residue protein sequence, read N- to C-terminus: ABC transporter G family member 7 (815 aa).

Disordered stretches follow at residues 81–141 (NNID…TPNF) and 177–249 (KQIK…TNGK). A coiled-coil region spans residues 164–199 (ENISYKTENRNYKKQIKDEKKRKKKLEMERSNSSNS). The span at 194–210 (SNSSNSNSSYDVESSAS) shows a compositional bias: low complexity. Positions 211–248 (GLQTPQQSRSSILPTNSLNISKIDQSMNPQQTRSTTNG) are enriched in polar residues. One can recognise an ABC transporter domain in the interval 242–485 (TRSTTNGKIE…SLPNQYQCPN (244 aa)). Residue 274 to 281 (GPSGSGKS) coordinates ATP. Residues 562 to 810 (TQYITRLSGG…VSGYWAISKL (249 aa)) form the ABC transmembrane type-2 domain. The next 7 membrane-spanning stretches (helical) occupy residues 568–588 (LSGG…LSPS), 598–618 (ILFF…TLFL), 647–667 (AFIQ…INHL), 675–695 (FITY…IIAI), 706–726 (FIYG…LVPV), 732–752 (SFGW…VMVA), and 788–808 (GIGI…WAIS).

The protein belongs to the ABC transporter superfamily. ABCG family.

The protein localises to the membrane. The sequence is that of ABC transporter G family member 7 (abcG7) from Dictyostelium discoideum (Social amoeba).